Reading from the N-terminus, the 1481-residue chain is Neuropathy target esterase sws (1481 aa).

Residues 1-34 (MDVLELLRASANGCYNTIFSDAWSQYVSQQITSS) lie on the Lumenal side of the membrane. The chain crosses the membrane as a helical span at residues 35-55 (LYLYIALGILTVLFVAWFIYF). Topologically, residues 56–1481 (KRLARLRLRD…KENKNVNTKN (1426 aa)) are cytoplasmic. An a nucleoside 3',5'-cyclic phosphate-binding site is contributed by 175–302 (IFGHFEKPVF…IRVIQVIMIR (128 aa)). The disordered stretch occupies residues 336–420 (HLNSQSQSSQ…NNVQLPEVHG (85 aa)). 2 stretches are compositionally biased toward low complexity: residues 339–379 (SQSQ…LPLQ) and 401–412 (SGPNPNPNSGNN). Ser448 carries the post-translational modification Phosphoserine. A nucleoside 3',5'-cyclic phosphate contacts are provided by residues 492–624 (ELGL…VVRR) and 613–740 (IVLD…LSHR). One can recognise a PNPLA domain in the interval 967–1133 (LVLGGGGARG…VNNLPGHLWR (167 aa)). The GXGXXG motif lies at 971–976 (GGGARG). A GXSXG motif is present at residues 998 to 1002 (GVSIG). The Nucleophile role is filled by Ser1000. Asp1120 (proton acceptor) is an active-site residue. Positions 1120–1122 (DGG) match the DGA/G motif. The residue at position 1214 (Ser1214) is a Phosphoserine. Positions 1366–1481 (LSLSEAEMDS…KENKNVNTKN (116 aa)) are disordered. 2 stretches are compositionally biased toward basic and acidic residues: residues 1379 to 1390 (IDFRSDSKKDKA) and 1400 to 1410 (KDNEDKTDAVD). Low complexity predominate over residues 1445–1457 (TNTMTTQTTSPTT).

This sequence belongs to the NTE family. In terms of assembly, interacts with Pka-C3; interaction inhibits the catalytic function of Pka-C3 and the esterase activity of sws.

The protein localises to the endoplasmic reticulum membrane. The catalysed reaction is a 1-acyl-sn-glycero-3-phosphocholine + H2O = sn-glycerol 3-phosphocholine + a fatty acid + H(+). Phospholipase B that deacylates intracellular phosphatidylcholine (PtdCho), generating glycerophosphocholine (GroPtdCho). This deacylation occurs at both sn-2 and sn-1 positions of PtdCho. Its specific chemical modification by certain organophosphorus (OP) compounds leads to distal axonopathy. Plays a role in the signaling mechanism between neurons and glia that regulates glia wrapping during development of the adult brain. Essential for membrane lipid homeostasis and cell survival in both neurons and glia of the adult brain. This Drosophila willistoni (Fruit fly) protein is Neuropathy target esterase sws.